Reading from the N-terminus, the 250-residue chain is Small ribosomal subunit protein uS2 (250 aa).

This sequence belongs to the universal ribosomal protein uS2 family.

This Variovorax paradoxus (strain S110) protein is Small ribosomal subunit protein uS2.